Reading from the N-terminus, the 442-residue chain is Trigger factor (442 aa).

Residues 165 to 250 (DDRVIIDFEG…LQKVMAPELP (86 aa)) form the PPIase FKBP-type domain.

Belongs to the FKBP-type PPIase family. Tig subfamily.

It localises to the cytoplasm. It catalyses the reaction [protein]-peptidylproline (omega=180) = [protein]-peptidylproline (omega=0). Involved in protein export. Acts as a chaperone by maintaining the newly synthesized protein in an open conformation. Functions as a peptidyl-prolyl cis-trans isomerase. The protein is Trigger factor of Coxiella burnetii (strain RSA 493 / Nine Mile phase I).